Reading from the N-terminus, the 197-residue chain is 3-isopropylmalate dehydratase small subunit (197 aa).

The protein belongs to the LeuD family. LeuD type 1 subfamily. Heterodimer of LeuC and LeuD.

It catalyses the reaction (2R,3S)-3-isopropylmalate = (2S)-2-isopropylmalate. Its pathway is amino-acid biosynthesis; L-leucine biosynthesis; L-leucine from 3-methyl-2-oxobutanoate: step 2/4. Its function is as follows. Catalyzes the isomerization between 2-isopropylmalate and 3-isopropylmalate, via the formation of 2-isopropylmaleate. In Mycobacterium sp. (strain KMS), this protein is 3-isopropylmalate dehydratase small subunit.